We begin with the raw amino-acid sequence, 369 residues long: Transmembrane protein adipocyte-associated 1 (369 aa).

Asparagine 20 carries N-linked (GlcNAc...) asparagine glycosylation. 7 consecutive transmembrane segments (helical) span residues 45 to 65 (LLLL…LPLA), 73 to 93 (SSPI…VGIA), 120 to 140 (FFLL…GHLE), 148 to 168 (VLAI…TLEI), 189 to 209 (QFWL…VILP), 237 to 257 (LLQG…LCCV), and 262 to 282 (FLYF…GFFG). Asparagine 329 carries N-linked (GlcNAc...) asparagine glycosylation.

It belongs to the UPF0359 family. In terms of tissue distribution, ubiquitous, with higher levels in heart, brain, lung, liver and kidney.

Its subcellular location is the membrane. This chain is Transmembrane protein adipocyte-associated 1 (Tpra1), found in Mus musculus (Mouse).